The following is a 143-amino-acid chain: Large ribosomal subunit protein uL13 (143 aa).

It belongs to the universal ribosomal protein uL13 family. In terms of assembly, part of the 50S ribosomal subunit.

Functionally, this protein is one of the early assembly proteins of the 50S ribosomal subunit, although it is not seen to bind rRNA by itself. It is important during the early stages of 50S assembly. This Alkaliphilus oremlandii (strain OhILAs) (Clostridium oremlandii (strain OhILAs)) protein is Large ribosomal subunit protein uL13.